The chain runs to 311 residues: MPRSFLVKKIKADGFQCSGVSAPTYHPLETAYVLPGTRGPPGDNGYVAHCLPPSGYDGEQKPGLELAPAEPAYPAAASEEYSDPESPQSSLSARYFRGEAAVTDSYSMDAFFISDGRSRRRRAGAGGDAAGAGDAGGGGGGGGGGERAGRSGATAGGGHRHACAECGKTYATSSNLSRHKQTHRSLDSQLARKCPTCGKAYVSMPALAMHVLTHNLRHKCGVCGKAFSRPWLLQGHMRSHTGEKPFGCAHCGKAFADRSNLRAHMQTHSAFKHYRCRQCDKSFALKSYLHKHCEAACVKAAEPPPSAGPAS.

Residues 1-20 (MPRSFLVKKIKADGFQCSGV) are SNAG domain. Disordered regions lie at residues 71–90 (PAYPAAASEEYSDPESPQSS) and 120–156 (RRRAGAGGDAAGAGDAGGGGGGGGGGERAGRSGATAG). Residues 124–146 (GAGGDAAGAGDAGGGGGGGGGGE) show a composition bias toward gly residues. 4 consecutive C2H2-type zinc fingers follow at residues 161–183 (HACAECGKTYATSSNLSRHKQTH), 192–214 (RKCPTCGKAYVSMPALAMHVLTH), 218–240 (HKCGVCGKAFSRPWLLQGHMRSH), and 246–268 (FGCAHCGKAFADRSNLRAHMQTH). Residues 274-297 (YRCRQCDKSFALKSYLHKHCEAAC) form a C2H2-type 5; atypical zinc finger.

Belongs to the snail C2H2-type zinc-finger protein family.

The protein localises to the nucleus. Its function is as follows. May be involved in transcriptional regulation. In Mus musculus (Mouse), this protein is Transcriptional repressor scratch 2 (Scrt2).